A 1129-amino-acid polypeptide reads, in one-letter code: A-kinase anchor protein 11 (1129 aa).

Over residues 1 to 12 (MQKMQCHLRRPL) the composition is skewed to basic residues. The segment at 1 to 21 (MQKMQCHLRRPLHSSSSFSSQ) is disordered. A phosphothreonine mark is found at threonine 251 and threonine 363. Disordered regions lie at residues 354–376 (IRDRNVIPDTPPSTPLVPSQTSS), 394–416 (EFAPATPPSTPHNSSVGSLSENE), and 434–455 (SEEVESSEGEEHPEMDVKSEHS). Over residues 404–416 (PHNSSVGSLSENE) the composition is skewed to polar residues. Phosphoserine is present on residues serine 434, serine 439, and serine 440. Residues 442 to 455 (GEEHPEMDVKSEHS) are compositionally biased toward basic and acidic residues. A Phosphoserine modification is found at serine 595. Threonine 742 carries the phosphothreonine modification. Serine 835 is modified (phosphoserine). The tract at residues 905–918 (LAEKIVAEAIEKAE) is PKA-RII binding region. The disordered stretch occupies residues 962 to 1061 (SKEVEDFQST…QEDGAEGLQP (100 aa)). Polar residues predominate over residues 968–995 (FQSTESLGSQQMNLSVGEDSTGSWSNLS). Basic and acidic residues predominate over residues 1002-1011 (DESSSFHHLS). Over residues 1012 to 1028 (ESSNGNSSSWSSLGLEG) the composition is skewed to low complexity. A compositionally biased stretch (polar residues) spans 1033 to 1042 (NNLSFPTSDS). The segment covering 1043-1056 (DGPDDRESEQEDGA) has biased composition (acidic residues).

In terms of tissue distribution, expressed in brain and testis.

It is found in the peroxisome. In terms of biological role, binds to type II regulatory subunits of protein kinase A and anchors/targets them. The chain is A-kinase anchor protein 11 (Akap11) from Rattus norvegicus (Rat).